We begin with the raw amino-acid sequence, 411 residues long: Serpin A3-3 (411 aa).

The first 24 residues, 1 to 24 (MRAERLSPLLALGLLVAGIRSVHC), serve as a signal peptide directing secretion. Residues asparagine 100, asparagine 180, asparagine 230, asparagine 264, and asparagine 318 are each glycosylated (N-linked (GlcNAc...) asparagine).

It belongs to the serpin family. Homodimer.

Its subcellular location is the cytoplasmic vesicle. It localises to the secretory vesicle. It is found in the chromaffin granule. The protein localises to the secreted. In terms of biological role, serine protease inhibitor. Strongly inhibits elastase and trypsin stoichiometrically at the molar ratio of 1:1. Acts as a moderate inhibitor of plasmin and chymotrypsin. Does not inhibit thrombin, urokinase, kallikrein, tissue plasminogen activator, cathepsin G or the cysteine proteases papain, cathepsin B or cathepsin L. This is Serpin A3-3 (SERPINA3-3) from Bos taurus (Bovine).